Here is a 229-residue protein sequence, read N- to C-terminus: MIQAIVTDIEGTTTDIRFVHQVLFPYARERLTPFLRAHQQDDDITALLVDLRREIAQPDADIETLITVLHGFMDEDRKSTVLKAIQGIIWRTGYLQADFRGHVYPEVAQQLADWHQQGLKLYVYSSGSVAAQKLLFGYSDAGDLCPLFSGYFDTHVGAKRDVSAYQKIANQLGIAPQALLFLSDIRQELDAAQLAGWHTCQLIRDLPDNDSAHPQVNRFDQIVLSLFTE.

The protein belongs to the HAD-like hydrolase superfamily. MasA/MtnC family. As to quaternary structure, monomer. Requires Mg(2+) as cofactor.

It catalyses the reaction 5-methylsulfanyl-2,3-dioxopentyl phosphate + H2O = 1,2-dihydroxy-5-(methylsulfanyl)pent-1-en-3-one + phosphate. The protein operates within amino-acid biosynthesis; L-methionine biosynthesis via salvage pathway; L-methionine from S-methyl-5-thio-alpha-D-ribose 1-phosphate: step 3/6. Its pathway is amino-acid biosynthesis; L-methionine biosynthesis via salvage pathway; L-methionine from S-methyl-5-thio-alpha-D-ribose 1-phosphate: step 4/6. Its function is as follows. Bifunctional enzyme that catalyzes the enolization of 2,3-diketo-5-methylthiopentyl-1-phosphate (DK-MTP-1-P) into the intermediate 2-hydroxy-3-keto-5-methylthiopentenyl-1-phosphate (HK-MTPenyl-1-P), which is then dephosphorylated to form the acireductone 1,2-dihydroxy-3-keto-5-methylthiopentene (DHK-MTPene). The protein is Enolase-phosphatase E1 of Yersinia pseudotuberculosis serotype IB (strain PB1/+).